Reading from the N-terminus, the 218-residue chain is Small ribosomal subunit protein uS3 (218 aa).

Residues 38–106 (IREFISKRLS…RVHINILEIK (69 aa)) enclose the KH type-2 domain.

This sequence belongs to the universal ribosomal protein uS3 family. Part of the 30S ribosomal subunit. Forms a tight complex with proteins S10 and S14.

Binds the lower part of the 30S subunit head. Binds mRNA in the 70S ribosome, positioning it for translation. In Bacillus pumilus (strain SAFR-032), this protein is Small ribosomal subunit protein uS3.